A 205-amino-acid chain; its full sequence is Outer-membrane lipoprotein LolB (205 aa).

The signal sequence occupies residues 1–17; the sequence is MFLRHVIVFSLIALLTG. A lipid anchor (N-palmitoyl cysteine) is attached at cysteine 18. A lipid anchor (S-diacylglycerol cysteine) is attached at cysteine 18.

Belongs to the LolB family. Monomer.

Its subcellular location is the cell outer membrane. In terms of biological role, plays a critical role in the incorporation of lipoproteins in the outer membrane after they are released by the LolA protein. The protein is Outer-membrane lipoprotein LolB of Pseudomonas savastanoi pv. phaseolicola (strain 1448A / Race 6) (Pseudomonas syringae pv. phaseolicola (strain 1448A / Race 6)).